The primary structure comprises 256 residues: 1-(5-phosphoribosyl)-5-[(5-phosphoribosylamino)methylideneamino] imidazole-4-carboxamide isomerase (256 aa).

Asp8 (proton acceptor) is an active-site residue. The active-site Proton donor is the Asp129.

It belongs to the HisA/HisF family.

Its subcellular location is the cytoplasm. It carries out the reaction 1-(5-phospho-beta-D-ribosyl)-5-[(5-phospho-beta-D-ribosylamino)methylideneamino]imidazole-4-carboxamide = 5-[(5-phospho-1-deoxy-D-ribulos-1-ylimino)methylamino]-1-(5-phospho-beta-D-ribosyl)imidazole-4-carboxamide. It participates in amino-acid biosynthesis; L-histidine biosynthesis; L-histidine from 5-phospho-alpha-D-ribose 1-diphosphate: step 4/9. The polypeptide is 1-(5-phosphoribosyl)-5-[(5-phosphoribosylamino)methylideneamino] imidazole-4-carboxamide isomerase (Picosynechococcus sp. (strain ATCC 27264 / PCC 7002 / PR-6) (Agmenellum quadruplicatum)).